We begin with the raw amino-acid sequence, 61 residues long: UPF0434 protein PFLU_3771 (61 aa).

It belongs to the UPF0434 family.

This Pseudomonas fluorescens (strain SBW25) protein is UPF0434 protein PFLU_3771.